Here is a 140-residue protein sequence, read N- to C-terminus: FAD synthase (140 aa).

Residues 9–10, 14–17, N92, and Y119 each bind ATP; these read TF and HPGH.

This sequence belongs to the archaeal FAD synthase family. As to quaternary structure, homodimer. Requires a divalent metal cation as cofactor.

It carries out the reaction FMN + ATP + H(+) = FAD + diphosphate. It functions in the pathway cofactor biosynthesis; FAD biosynthesis; FAD from FMN: step 1/1. Functionally, catalyzes the transfer of the AMP portion of ATP to flavin mononucleotide (FMN) to produce flavin adenine dinucleotide (FAD) coenzyme. This is FAD synthase from Methanocorpusculum labreanum (strain ATCC 43576 / DSM 4855 / Z).